A 157-amino-acid chain; its full sequence is Crossover junction endodeoxyribonuclease RuvC (157 aa).

Residues aspartate 7, glutamate 66, and aspartate 139 contribute to the active site. Aspartate 7, glutamate 66, and aspartate 139 together coordinate Mg(2+).

The protein belongs to the RuvC family. In terms of assembly, homodimer which binds Holliday junction (HJ) DNA. The HJ becomes 2-fold symmetrical on binding to RuvC with unstacked arms; it has a different conformation from HJ DNA in complex with RuvA. In the full resolvosome a probable DNA-RuvA(4)-RuvB(12)-RuvC(2) complex forms which resolves the HJ. Requires Mg(2+) as cofactor.

Its subcellular location is the cytoplasm. It carries out the reaction Endonucleolytic cleavage at a junction such as a reciprocal single-stranded crossover between two homologous DNA duplexes (Holliday junction).. Functionally, the RuvA-RuvB-RuvC complex processes Holliday junction (HJ) DNA during genetic recombination and DNA repair. Endonuclease that resolves HJ intermediates. Cleaves cruciform DNA by making single-stranded nicks across the HJ at symmetrical positions within the homologous arms, yielding a 5'-phosphate and a 3'-hydroxyl group; requires a central core of homology in the junction. The consensus cleavage sequence is 5'-(A/T)TT(C/G)-3'. Cleavage occurs on the 3'-side of the TT dinucleotide at the point of strand exchange. HJ branch migration catalyzed by RuvA-RuvB allows RuvC to scan DNA until it finds its consensus sequence, where it cleaves and resolves the cruciform DNA. Its function is as follows. Required for efficient infection in a mouse model system. This is Crossover junction endodeoxyribonuclease RuvC from Helicobacter pylori (strain G27).